Consider the following 333-residue polypeptide: Tetraacyldisaccharide 4'-kinase (333 aa).

Position 55–62 (55–62) interacts with ATP; it reads TAGGNGKT.

Belongs to the LpxK family.

The catalysed reaction is a lipid A disaccharide + ATP = a lipid IVA + ADP + H(+). Its pathway is glycolipid biosynthesis; lipid IV(A) biosynthesis; lipid IV(A) from (3R)-3-hydroxytetradecanoyl-[acyl-carrier-protein] and UDP-N-acetyl-alpha-D-glucosamine: step 6/6. Its function is as follows. Transfers the gamma-phosphate of ATP to the 4'-position of a tetraacyldisaccharide 1-phosphate intermediate (termed DS-1-P) to form tetraacyldisaccharide 1,4'-bis-phosphate (lipid IVA). The chain is Tetraacyldisaccharide 4'-kinase from Pectobacterium atrosepticum (strain SCRI 1043 / ATCC BAA-672) (Erwinia carotovora subsp. atroseptica).